The primary structure comprises 101 residues: Protein SPIRAL1-like 3 (101 aa).

Positions 1 to 22 (MGRGVSSGGGQSSLGYLFGGGE) are enriched in gly residues. 2 disordered regions span residues 1–54 (MGRG…GIQS) and 73–101 (TDRP…KDGK).

Belongs to the SPIRAL1 family.

Its function is as follows. Acts in maintaining the cortical microtubules organization essential for anisotropic cell growth. In Oryza sativa subsp. japonica (Rice), this protein is Protein SPIRAL1-like 3.